The chain runs to 517 residues: Retinal dehydrogenase 2 (517 aa).

NAD(+)-binding positions include 184–186 (IPW), 210–213 (KPAE), and 264–266 (STE). Glu-286 functions as the Proton acceptor in the catalytic mechanism. Catalysis depends on Cys-320, which acts as the Nucleophile. NAD(+) is bound by residues 366–370 (KQYNK) and Glu-417.

Belongs to the aldehyde dehydrogenase family. Homotetramer. In terms of tissue distribution, expressed in the high vocal center (HVC) which integrates auditory and motor activities and constitutes a nodal nucleus on the song system.

It localises to the cytoplasm. It catalyses the reaction retinal + NAD(+) + H2O = retinoate + NADH + 2 H(+). It carries out the reaction all-trans-retinal + NAD(+) + H2O = all-trans-retinoate + NADH + 2 H(+). The enzyme catalyses all-trans-13,14-dihydroretinal + NAD(+) + H2O = all-trans-13,14-dihydroretinoate + NADH + 2 H(+). It participates in cofactor metabolism; retinol metabolism. Catalyzes the NAD-dependent oxidation of aldehyde substrates, such as all-trans-retinal and all-trans-13,14-dihydroretinal, to their corresponding carboxylic acids, all-trans-retinoate and all-trans-13,14-dihydroretinoate, respectively. Retinoate signaling is critical for the transcriptional control of many genes, for instance it is crucial for initiation of meiosis in both male and female. Recognizes retinal as substrate, both in its free form and when bound to cellular retinol-binding protein. Lacks activity with benzaldehyde, acetaldehyde and octanal. Displays complete lack of activity with citral. Plays a significant role in the acquisition and production of learned songs. This is Retinal dehydrogenase 2 (ALDH1A2) from Taeniopygia guttata (Zebra finch).